Here is a 238-residue protein sequence, read N- to C-terminus: Large ribosomal subunit protein uL2 (238 aa).

Residues 198–238 (NHPHGGGSHQSPSFPTTVSRNAPPGRKVGHIAARSTGRRKR) form a disordered region. The segment covering 206-217 (HQSPSFPTTVSR) has biased composition (polar residues).

The protein belongs to the universal ribosomal protein uL2 family. In terms of assembly, part of the 50S ribosomal subunit. Forms a bridge to the 30S subunit in the 70S ribosome.

Functionally, one of the primary rRNA binding proteins. Required for association of the 30S and 50S subunits to form the 70S ribosome, for tRNA binding and peptide bond formation. It has been suggested to have peptidyltransferase activity; this is somewhat controversial. Makes several contacts with the 16S rRNA in the 70S ribosome. The chain is Large ribosomal subunit protein uL2 from Hyperthermus butylicus (strain DSM 5456 / JCM 9403 / PLM1-5).